A 119-amino-acid polypeptide reads, in one-letter code: Protein Wnt-4 (119 aa).

Residue S1 is the site of O-palmitoleoyl serine; by PORCN attachment. 2 disulfides stabilise this stretch: C69–C100 and C85–C95. N-linked (GlcNAc...) asparagine glycosylation occurs at N86.

The protein belongs to the Wnt family. Post-translationally, palmitoleoylation is required for efficient binding to frizzled receptors. Depalmitoleoylation leads to Wnt signaling pathway inhibition.

The protein localises to the secreted. It is found in the extracellular space. Its subcellular location is the extracellular matrix. Ligand for members of the frizzled family of seven transmembrane receptors. Plays an important role in embryonic development. This is Protein Wnt-4 (WNT-4) from Plethodon jordani (Red-cheeked salamander).